Consider the following 407-residue polypeptide: Formamidase (407 aa).

In terms of assembly, homotrimer.

The catalysed reaction is formamide + H2O = formate + NH4(+). Its function is as follows. Hydrolyzes formamide with the production of ammonia which can be used as a source of nitrogen for growth. Also acts, more slowly, on acetamide, propanamide and butanamide. The polypeptide is Formamidase (fmdA) (Methylophilus methylotrophus (Bacterium W3A1)).